Consider the following 1504-residue polypeptide: DNA polymerase zeta catalytic subunit (1504 aa).

Zn(2+) contacts are provided by cysteine 1398, cysteine 1401, cysteine 1414, and cysteine 1417. The CysA-type zinc-finger motif lies at 1398-1417; the sequence is CCNCGEELTKICSLQLCDDC. Cysteine 1446, cysteine 1449, cysteine 1468, and cysteine 1473 together coordinate [4Fe-4S] cluster. A CysB motif motif is present at residues 1446 to 1473; it reads CRTCSYRYTSDAGIENDHIASKCNSYDC.

The protein belongs to the DNA polymerase type-B family. As to quaternary structure, forms DNA polymerase zeta with REV7. It depends on [4Fe-4S] cluster as a cofactor.

It is found in the mitochondrion. Its subcellular location is the nucleus. The catalysed reaction is DNA(n) + a 2'-deoxyribonucleoside 5'-triphosphate = DNA(n+1) + diphosphate. Nonessential DNA polymerase. Required for DNA damage induced mutagenesis. Involved in DNA repair, mitochondrial DNA repair and translesion synthesis. Translesion synthesis in S.cerevisiae may use a specialized DNA polymerase that is not required for other DNA replicative processes. Has a role in the bypass of abasic (AP) sites. Highly inefficient in incorporating nucleotides opposite the AP site, but efficiently extends from nucleotides, particularly an A, inserted opposite the lesion. This Saccharomyces cerevisiae (strain ATCC 204508 / S288c) (Baker's yeast) protein is DNA polymerase zeta catalytic subunit (REV3).